The sequence spans 733 residues: Wall-associated receptor kinase 5 (733 aa).

The signal sequence occupies residues 1 to 23; that stretch reads MKVHSLFLMAIFFYLAYTQLVKA. Topologically, residues 24-330 are extracellular; that stretch reads QPRDDCQTRC…IDTPKEEPKY (307 aa). Residues Asn57, Asn77, Asn110, Asn137, Asn184, Asn206, Asn218, Asn232, and Asn247 are each glycosylated (N-linked (GlcNAc...) asparagine). The EGF-like 1 domain occupies 231 to 278; it reads GNQTCEQVVGRNICGGNSTCFDSTRGKGYNCKCLQGFDGNPYLSDGCQ. 6 cysteine pairs are disulfide-bonded: Cys235–Cys250, Cys244–Cys261, Cys263–Cys277, Cys283–Cys296, Cys290–Cys305, and Cys307–Cys320. The region spanning 279 to 321 is the EGF-like 2; calcium-binding domain; it reads DINECTTRIHNCSDTSTCENTLGSFHCQCPSGSDLNTTTMSCI. Residue Asn289 is glycosylated (N-linked (GlcNAc...) asparagine). Asn314 is a glycosylation site (N-linked (GlcNAc...) asparagine). The chain crosses the membrane as a helical span at residues 331–351; it reads LGWTTVLLGTTIGFLIILLTI. Over 352–733 the chain is Cytoplasmic; the sequence is SYIQQKMRHR…VTRLDIETGR (382 aa). At Thr397 the chain carries Phosphothreonine. The region spanning 408 to 691 is the Protein kinase domain; it reads YNESRILGQG…RVKTTKHQWS (284 aa). ATP contacts are provided by residues 414-422 and Lys436; that span reads LGQGGQGTV. A Phosphotyrosine modification is found at Tyr481. Asp533 functions as the Proton acceptor in the catalytic mechanism. Phosphothreonine is present on residues Thr567 and Thr572. The residue at position 580 (Tyr580) is a Phosphotyrosine.

It belongs to the protein kinase superfamily. Ser/Thr protein kinase family. Predominantly expressed in green tissues such as stems and leaves.

Its subcellular location is the membrane. It carries out the reaction L-seryl-[protein] + ATP = O-phospho-L-seryl-[protein] + ADP + H(+). The catalysed reaction is L-threonyl-[protein] + ATP = O-phospho-L-threonyl-[protein] + ADP + H(+). Functionally, serine/threonine-protein kinase that may function as a signaling receptor of extracellular matrix component. Binding to pectin may have significance in the control of cell expansion, morphogenesis and development. The sequence is that of Wall-associated receptor kinase 5 (WAK5) from Arabidopsis thaliana (Mouse-ear cress).